Here is a 340-residue protein sequence, read N- to C-terminus: Ferrochelatase (340 aa).

The Fe cation site is built by His189 and Glu292.

Belongs to the ferrochelatase family.

It is found in the cytoplasm. It carries out the reaction heme b + 2 H(+) = protoporphyrin IX + Fe(2+). It functions in the pathway porphyrin-containing compound metabolism; protoheme biosynthesis; protoheme from protoporphyrin-IX: step 1/1. Catalyzes the ferrous insertion into protoporphyrin IX. This Pseudomonas paraeruginosa (strain DSM 24068 / PA7) (Pseudomonas aeruginosa (strain PA7)) protein is Ferrochelatase.